Here is a 127-residue protein sequence, read N- to C-terminus: MSLQSNSVKPTEIPLSEIRRPLAPVLDPQKIDAMVATMKGIPTASKTCSLEQAEAAASAGELPPVDVLGVRVKGQTLYYAFGGCHRLQAYDRRARETQNAAFPVRCRVLPATPRQIRMYLGSSLDIE.

It belongs to the sulfiredoxin family. Requires Mg(2+) as cofactor. Forms a transient disulfide bond with TSA1 during the reduction of cysteine sulfinic acid (-SO2H).

Its subcellular location is the cytoplasm. The protein localises to the nucleus. It catalyses the reaction S-hydroxy-S-oxy-L-cysteinyl-[peroxiredoxin] + [protein]-dithiol + ATP = S-hydroxy-L-cysteinyl-[peroxiredoxin] + [protein]-disulfide + ADP + phosphate. Contributes to oxidative stress resistance by reducing cysteine-sulfinic acid formed under exposure to oxidants in the peroxiredoxin TSA1. May catalyze the reduction in a multi-step process by acting both as a specific phosphotransferase and as thioltransferase. The protein is Sulfiredoxin of Saccharomyces cerevisiae (strain ATCC 204508 / S288c) (Baker's yeast).